The sequence spans 145 residues: Basic phospholipase A2 cPm08 (145 aa).

The signal sequence occupies residues 1–21; it reads MYPAHLLVLLAVCVSLLGASA. Residues 22–27 constitute a propeptide that is removed on maturation; it reads IPPLPL. 7 disulfide bridges follow: cysteine 38/cysteine 98, cysteine 54/cysteine 144, cysteine 56/cysteine 72, cysteine 71/cysteine 125, cysteine 78/cysteine 118, cysteine 87/cysteine 111, and cysteine 105/cysteine 116. The Ca(2+) site is built by tyrosine 55, glycine 57, and glycine 59. Histidine 75 is an active-site residue. Aspartate 76 provides a ligand contact to Ca(2+). The active site involves aspartate 119.

This sequence belongs to the phospholipase A2 family. Group I subfamily. D49 sub-subfamily. It depends on Ca(2+) as a cofactor. In terms of tissue distribution, expressed by the venom gland.

It is found in the secreted. The catalysed reaction is a 1,2-diacyl-sn-glycero-3-phosphocholine + H2O = a 1-acyl-sn-glycero-3-phosphocholine + a fatty acid + H(+). Its function is as follows. PLA2 catalyzes the calcium-dependent hydrolysis of the 2-acyl groups in 3-sn-phosphoglycerides. This chain is Basic phospholipase A2 cPm08, found in Laticauda semifasciata (Black-banded sea krait).